We begin with the raw amino-acid sequence, 250 residues long: Flagellar L-ring protein (250 aa).

A signal peptide spans 1–32 (MTRINTNTQKNNNTKFSKLILGVMVSSIVLSG). Residue Cys33 is the site of N-palmitoyl cysteine attachment. Residue Cys33 is the site of S-diacylglycerol cysteine attachment.

Belongs to the FlgH family. As to quaternary structure, the basal body constitutes a major portion of the flagellar organelle and consists of four rings (L,P,S, and M) mounted on a central rod.

The protein resides in the cell outer membrane. The protein localises to the bacterial flagellum basal body. In terms of biological role, assembles around the rod to form the L-ring and probably protects the motor/basal body from shearing forces during rotation. This chain is Flagellar L-ring protein, found in Hydrogenovibrio crunogenus (strain DSM 25203 / XCL-2) (Thiomicrospira crunogena).